The sequence spans 233 residues: Purine nucleoside phosphorylase DeoD-type (233 aa).

H4 is an a purine D-ribonucleoside binding site. Phosphate contacts are provided by residues G20, R24, R43, and 87–90; that span reads RIGT. Residues 179-181 and 203-204 contribute to the a purine D-ribonucleoside site; these read EME and SD. Residue D204 is the Proton donor of the active site.

It belongs to the PNP/UDP phosphorylase family. Homohexamer; trimer of homodimers.

The enzyme catalyses a purine D-ribonucleoside + phosphate = a purine nucleobase + alpha-D-ribose 1-phosphate. It carries out the reaction a purine 2'-deoxy-D-ribonucleoside + phosphate = a purine nucleobase + 2-deoxy-alpha-D-ribose 1-phosphate. Catalyzes the reversible phosphorolytic breakdown of the N-glycosidic bond in the beta-(deoxy)ribonucleoside molecules, with the formation of the corresponding free purine bases and pentose-1-phosphate. This is Purine nucleoside phosphorylase DeoD-type from Helicobacter pylori (strain J99 / ATCC 700824) (Campylobacter pylori J99).